A 171-amino-acid chain; its full sequence is Macro domain-containing protein RSc0334 (171 aa).

Positions 1–171 constitute a Macro domain; sequence MPIPTVTLRA…LYETALNEAR (171 aa).

Belongs to the MacroD-type family.

In Ralstonia nicotianae (strain ATCC BAA-1114 / GMI1000) (Ralstonia solanacearum), this protein is Macro domain-containing protein RSc0334.